Reading from the N-terminus, the 2327-residue chain is Pre-mRNA-processing-splicing factor 8 homolog (2327 aa).

The span at 1–14 shows a compositional bias: polar residues; the sequence is MDDTNSNINQSNES. Residues 1 to 20 form a disordered region; it reads MDDTNSNINQSNESQHLEEK. The tract at residues 801–1292 is reverse transcriptase homology domain; sequence TTVHWLEKRR…KIQTRVKIGL (492 aa). The linker stretch occupies residues 1293 to 1566; that stretch reads NSKMPNRFPP…TLKISLIQIF (274 aa). The interval 1502-1515 is important for branch point selection; sequence MKYKKLTHAQRSGL. Residues 1570–1740 form a restriction endonuclease homology domain region; the sequence is LWQKIHESLV…LRERIRKGLQ (171 aa). Residues 1657 to 2023 are involved in interaction with pre-mRNA 5' splice site; it reads GDFDSHDIER…QIAEIEKQKT (367 aa). The interval 1755-2008 is RNase H homology domain; it reads NFGELFSNKI…ILGMEISAPS (254 aa). One can recognise an MPN domain in the interval 2093 to 2223; sequence TYVFPKNILK…LTAYHLTPSG (131 aa).

Part of the U5 snRNP complex and of the U4/U6-U5 tri-snRNP complex.

The protein resides in the nucleus speckle. Functions as a scaffold that mediates the ordered assembly of spliceosomal proteins and snRNAs. Required for the assembly of the U4/U6-U5 tri-snRNP complex. Functions as a scaffold that positions spliceosomal U2, U5 and U6 snRNAs at splice sites on pre-mRNA substrates, so that splicing can occur. Interacts with both the 5' and the 3' splice site. The chain is Pre-mRNA-processing-splicing factor 8 homolog (prpf8) from Dictyostelium discoideum (Social amoeba).